The sequence spans 283 residues: Bifunctional protein FolD (283 aa).

NADP(+) is bound by residues 165–167 (GRS), serine 190, and valine 231.

The protein belongs to the tetrahydrofolate dehydrogenase/cyclohydrolase family. Homodimer.

It carries out the reaction (6R)-5,10-methylene-5,6,7,8-tetrahydrofolate + NADP(+) = (6R)-5,10-methenyltetrahydrofolate + NADPH. It catalyses the reaction (6R)-5,10-methenyltetrahydrofolate + H2O = (6R)-10-formyltetrahydrofolate + H(+). It functions in the pathway one-carbon metabolism; tetrahydrofolate interconversion. In terms of biological role, catalyzes the oxidation of 5,10-methylenetetrahydrofolate to 5,10-methenyltetrahydrofolate and then the hydrolysis of 5,10-methenyltetrahydrofolate to 10-formyltetrahydrofolate. The protein is Bifunctional protein FolD of Bacillus velezensis (strain DSM 23117 / BGSC 10A6 / LMG 26770 / FZB42) (Bacillus amyloliquefaciens subsp. plantarum).